The primary structure comprises 74 residues: Protein SlyX homolog (74 aa).

Belongs to the SlyX family.

The polypeptide is Protein SlyX homolog (Aliivibrio fischeri (strain ATCC 700601 / ES114) (Vibrio fischeri)).